The following is a 484-amino-acid chain: tRNA nucleotidyltransferase cca2 (484 aa).

Residues 122-124 (RAE) carry the B/A element motif. Positions 125-142 (SYDDKSRIPSVTPGTVET) are flexible loop. The short motif at 234–244 (ERVGEEIEKML) is the ERhxxExxxhh motif element.

It belongs to the tRNA nucleotidyltransferase/poly(A) polymerase family.

It localises to the cytoplasm. The enzyme catalyses a tRNA with a 3' CC end + ATP = a tRNA with a 3' CCA end + diphosphate. Functionally, tRNA nucleotidyltransferase involved in the synthesis of the tRNA CCA terminus. In contrast to what is usually observed in eukaryotes for which one enzyme synthesizes the whole tRNA CCA terminus, in S.pombe, cca1 specifically adds two cytidine residues to a tRNA substrate lacking this sequence while cca2 specifically adds the terminal adenosine residue thereby completing the CCA sequence. This chain is tRNA nucleotidyltransferase cca2, found in Schizosaccharomyces pombe (strain 972 / ATCC 24843) (Fission yeast).